A 309-amino-acid chain; its full sequence is Glutaminase (309 aa).

The substrate site is built by Ser64, Asn114, Glu160, Asn167, Tyr191, Tyr243, and Val261.

This sequence belongs to the glutaminase family. Homotetramer.

It carries out the reaction L-glutamine + H2O = L-glutamate + NH4(+). The sequence is that of Glutaminase from Rhizobium johnstonii (strain DSM 114642 / LMG 32736 / 3841) (Rhizobium leguminosarum bv. viciae).